The sequence spans 61 residues: Temporin-SN4 (61 aa).

The N-terminal stretch at methionine 1–cysteine 22 is a signal peptide. The propeptide at glutamate 23 to lysine 44 is removed in mature form. Residue lysine 61 is modified to Lysine amide.

Belongs to the frog skin active peptide (FSAP) family. Temporin subfamily. As to expression, expressed by the skin glands.

The protein resides in the secreted. Functionally, antimicrobial peptide. Active against some Gram-positive and Gram-negative bacterial strains. Active against fungus C.glabrata 090902 but not against C.albicans ATCC 12231. Shows weak hemolytic activity against human erythrocytes. The chain is Temporin-SN4 from Sylvirana spinulosa (Fine-spined frog).